The primary structure comprises 217 residues: Probable transaldolase (217 aa).

Lys83 serves as the catalytic Schiff-base intermediate with substrate.

It belongs to the transaldolase family. Type 3B subfamily.

The protein resides in the cytoplasm. It catalyses the reaction D-sedoheptulose 7-phosphate + D-glyceraldehyde 3-phosphate = D-erythrose 4-phosphate + beta-D-fructose 6-phosphate. It participates in carbohydrate degradation; pentose phosphate pathway; D-glyceraldehyde 3-phosphate and beta-D-fructose 6-phosphate from D-ribose 5-phosphate and D-xylulose 5-phosphate (non-oxidative stage): step 2/3. Transaldolase is important for the balance of metabolites in the pentose-phosphate pathway. The chain is Probable transaldolase from Sinorhizobium medicae (strain WSM419) (Ensifer medicae).